The chain runs to 573 residues: Urease subunit alpha (573 aa).

The 438-residue stretch at 136–573 folds into the Urease domain; the sequence is GAIDCHVHFI…LPMAQRYFLF (438 aa). Positions 141, 143, and 224 each coordinate Ni(2+). K224 carries the N6-carboxylysine modification. H226 is a binding site for substrate. Ni(2+) contacts are provided by H253 and H279. H327 (proton donor) is an active-site residue. D367 lines the Ni(2+) pocket.

Belongs to the metallo-dependent hydrolases superfamily. Urease alpha subunit family. Heterotrimer of UreA (gamma), UreB (beta) and UreC (alpha) subunits. Three heterotrimers associate to form the active enzyme. Requires Ni cation as cofactor. Carboxylation allows a single lysine to coordinate two nickel ions.

The protein resides in the cytoplasm. The enzyme catalyses urea + 2 H2O + H(+) = hydrogencarbonate + 2 NH4(+). The protein operates within nitrogen metabolism; urea degradation; CO(2) and NH(3) from urea (urease route): step 1/1. The polypeptide is Urease subunit alpha (Nocardia farcinica (strain IFM 10152)).